A 216-amino-acid chain; its full sequence is uncharacterized protein (216 aa).

Residues 39–59 (VLPLTFIGSLLILILTIVYYF) traverse the membrane as a helical segment. Residues 59 to 108 (FTLSGSVNELKNEISKEKSKKERLLSEIKRLEELKKTLETKKAIYEVVKI) are a coiled coil.

The protein localises to the membrane. This is an uncharacterized protein from Aquifex aeolicus (strain VF5).